An 80-amino-acid polypeptide reads, in one-letter code: Teretoxin Tan6.1 (80 aa).

Positions Met1–Leu21 are cleaved as a signal peptide. Residues Gly22 to Arg34 constitute a propeptide that is removed on maturation.

The protein belongs to the teretoxin M (TM) superfamily. In terms of processing, contains 3 disulfide bonds. As to expression, expressed by the venom duct.

The protein resides in the secreted. This chain is Teretoxin Tan6.1, found in Terebra anilis (Auger snail).